The following is a 396-amino-acid chain: Initiation-specific alpha-1,6-mannosyltransferase (396 aa).

The Cytoplasmic portion of the chain corresponds to 1-7 (MLRLRLR). A helical; Signal-anchor for type II membrane protein membrane pass occupies residues 8–28 (SIVIGAAIAGSILLLFNHGSI). Topologically, residues 29–396 (EGMEDLTEIS…HFFAGSWKDD (368 aa)) are lumenal. Residues 229–231 (DID) carry the DXD motif motif. A glycan (N-linked (GlcNAc...) asparagine) is linked at asparagine 345.

The protein belongs to the glycosyltransferase 32 family. The cofactor is Mn(2+).

It is found in the endoplasmic reticulum membrane. The protein localises to the golgi apparatus membrane. It carries out the reaction Transfers an alpha-D-mannosyl residue from GDP-mannose into lipid-linked oligosaccharide, forming an alpha-(1-&gt;6)-D-mannosyl-D-mannose linkage.. In terms of biological role, mannosyltransferase involved in outer chain elongation of asparagine-linked oligosaccharides of the type Man(9)GlcNAc(2). May otherwise add the first alpha-1,6-mannose to the Man(8)GlcNAc(2) core oligosaccharide from the ER. Represents the first enzymatic event required for synthesis of outer chain mannose linkages on yeast secretory proteins. This chain is Initiation-specific alpha-1,6-mannosyltransferase, found in Schizosaccharomyces pombe (strain 972 / ATCC 24843) (Fission yeast).